Reading from the N-terminus, the 1576-residue chain is Protein Shroom (1576 aa).

7 disordered regions span residues 1–31 (MKMRNHKENGNGSEMGESTKSLAKMEPENNN), 46–100 (SNGA…TQAG), 112–142 (YDQTAFHHQKQPSYAQSEGYHSYVSSSDSTS), 187–244 (RQSH…SSTE), 267–434 (ISES…ISVT), 589–609 (VERQQQQQKEEQQLLRPHSQS), and 621–660 (PNNLSPIMVGLPTGSNSASTRDCSSPTPPPPPRRSGSLLP). The span at 10–21 (GNGSEMGESTKS) shows a compositional bias: polar residues. Composition is skewed to low complexity over residues 46-69 (SNGANSRSSNSNASFSSASVAGSV), 76-91 (HNSSSSQLGQQHGSSL), and 128-142 (SEGYHSYVSSSDSTS). The segment covering 189–211 (SHSHSHSHAHSHSNSHGHSHGHA) has biased composition (basic residues). Low complexity-rich tracts occupy residues 212–244 (HSASSSSSSNNNSNGSATNNNNNNSSESTSSTE) and 267–283 (ISESVSSSQRIVHSSRV). Polar residues predominate over residues 305 to 317 (DSSPTASNSSQMM). A compositionally biased stretch (low complexity) spans 376 to 388 (QSTLSTQSSLLEL). The segment covering 399-415 (MGQSHSMGDLQQKNPHQ) has biased composition (polar residues). At serine 404 the chain carries Phosphoserine. Residues 445–920 (APQPPAGKPS…LESNQQKRSN (476 aa)) are F-actin binding region required for planar polarity and cortical localization. The span at 633 to 643 (TGSNSASTRDC) shows a compositional bias: polar residues. A phosphoserine mark is found at serine 667 and serine 668. 7 disordered regions span residues 699–728 (ISFNDCGMPPPPPPPRGRLAVPTRRTSSAT), 743–823 (AALA…NCFA), 849–876 (VPKKPTSLQHKHLANGGGGSRKRPHHAT), 910–939 (NLESNQQKRSNSKASYLPRQSLEKLNNTDP), 1036–1055 (GYGKSSKPVTPQQYTRSQSY), 1091–1116 (PTATPTPTPTPTPTPPRLSPASSHSD), and 1210–1244 (SFANEPLMTPPLPPSPPPPLEPEEEEEQEENDVHD). A compositionally biased stretch (basic residues) spans 748–759 (QQHHPQQHRHAQ). Over residues 798 to 816 (PLPPPPPPEVLQPRPPPSP) the composition is skewed to pro residues. Composition is skewed to polar residues over residues 910-923 (NLESNQQKRSNSKA) and 1042-1055 (KPVTPQQYTRSQSY). Pro residues-rich tracts occupy residues 1094–1108 (TPTPTPTPTPTPPRL) and 1217–1229 (MTPPLPPSPPPPL). The segment covering 1230 to 1239 (EPEEEEEQEE) has biased composition (acidic residues). The stretch at 1232–1296 (EEEEEQEEND…LEAAREEHQT (65 aa)) forms a coiled coil. The ASD2 domain occupies 1305–1572 (RQPIELDYEQ…QLSSLSDALV (268 aa)).

This sequence belongs to the shroom family. In terms of assembly, monomer or homodimer. Interacts with Rok. As to quaternary structure, binds (via N-terminus) to F-actin.

The protein localises to the cell junction. Its subcellular location is the adherens junction. The protein resides in the cytoplasm. It is found in the cytoskeleton. It localises to the apical cell membrane. Functionally, binds to Rho-kinase Rok and targets it to the apical cell cortex where it mediates apical constriction. During embryogenic axis elongation, required for the localization to adherens junctions and the establishment of planar polarization of both Rho-kinase Rok and myosin regulatory light chain sqh. May be involved in the assembly of microtubule arrays during cell elongation. The chain is Protein Shroom from Drosophila melanogaster (Fruit fly).